The following is a 797-amino-acid chain: Protocadherin beta-11 (797 aa).

Residues 1-26 (MENGGTRTQQIRQVLLLFVLLGMSQA) form the signal peptide. Residues 27-690 (GSETWSFSVA…AQTDFLTVYL (664 aa)) are Extracellular-facing. 5 consecutive Cadherin domains span residues 35–133 (VAEE…SPIF), 138–242 (MLLE…SPEF), 247–347 (YEVK…APEI), 352–451 (ITSP…APTF), and 456–561 (YTLF…SPFV). N-linked (GlcNAc...) asparagine glycosylation is found at N418, N436, N487, and N567. The Cadherin 6 domain occupies 568-671 (GSAPCTELVP…LVDGFSQPFL (104 aa)). Residues 691 to 711 (VVALASVSSLFFFSVLLFVAV) form a helical membrane-spanning segment. The Cytoplasmic segment spans residues 712-797 (RLCRRSRAAS…TFQNSFGFNF (86 aa)).

It is found in the cell membrane. Its function is as follows. Potential calcium-dependent cell-adhesion protein. May be involved in the establishment and maintenance of specific neuronal connections in the brain. The protein is Protocadherin beta-11 (PCDHB11) of Pan troglodytes (Chimpanzee).